Reading from the N-terminus, the 859-residue chain is Transforming growth factor-beta receptor-associated protein 1 (859 aa).

In terms of domain architecture, CNH spans 24–297 (RGLLECVECC…HILQDFEGRV (274 aa)). One copy of the CHCR repeat lies at 563 to 727 (KRPLDEQQSG…LLAVYLGPGP (165 aa)).

It belongs to the TRAP1 family. As to quaternary structure, interacts with TGFBR2 and ACVR2B; in the absence of ligand stimulation. Interacts with TGFBR1, ACVRL1, BMPR1A and ACVR1B; in the absence of ligand stimulation and to a less extent. Interacts with SMAD4; the interaction seems to be mutually exclusive with the interaction of SMAD4 and phosphorylated SMAD2. May interact with ALOX5. Interacts with RAB5C. Interacts with VPS8, VPS11 and VPS16. Component of the putative class C core vacuole/endosome tethering (CORVET) complex; the core of which composed of the class C Vps proteins VPS11, VPS16, VPS18 and VPS33A, is associated with VPS8 and TGFBRAP1.

It is found in the cytoplasm. It localises to the early endosome. Plays a role in the TGF-beta/activin signaling pathway. It associates with inactive heteromeric TGF-beta and activin receptor complexes, mainly through the type II receptor, and is released upon activation of signaling. May recruit SMAD4 to the vicinity of the receptor complex and facilitate its interaction with receptor-regulated Smads, such as SMAD2. Functionally, plays a role in vesicle-mediated protein trafficking of the endocytic membrane transport pathway. Believed to act as a component of the putative CORVET endosomal tethering complexes which is proposed to be involved in the Rab5-to-Rab7 endosome conversion probably implicating MON1A/B, and via binding SNAREs and SNARE complexes to mediate tethering and docking events during SNARE-mediated membrane fusion. The CORVET complex is proposed to function as a Rab5 effector to mediate early endosome fusion probably in specific endosome subpopulations. Functions predominantly in APPL1-containing endosomes and in degradative but not recycling trafficking of endocytosed cargo. This chain is Transforming growth factor-beta receptor-associated protein 1 (TGFBRAP1), found in Bos taurus (Bovine).